A 309-amino-acid chain; its full sequence is Ferrochelatase (309 aa).

Residues His-185 and Glu-262 each contribute to the Fe cation site.

Belongs to the ferrochelatase family.

It is found in the cytoplasm. It carries out the reaction heme b + 2 H(+) = protoporphyrin IX + Fe(2+). It participates in porphyrin-containing compound metabolism; protoheme biosynthesis; protoheme from protoporphyrin-IX: step 1/1. Functionally, catalyzes the ferrous insertion into protoporphyrin IX. The protein is Ferrochelatase of Campylobacter jejuni subsp. jejuni serotype O:6 (strain 81116 / NCTC 11828).